Consider the following 317-residue polypeptide: Mitochondrial thiamine pyrophosphate carrier 1 (317 aa).

6 helical membrane passes run 21 to 41 (AVSGLHAVVAGSVSGLVARSV), 86 to 106 (VPASAMYVLYGSLQFGTYAWL), 122 to 142 (LAVGALAGLVSSLLTYPLDLL), 176 to 196 (GGAWAIAATTLTTGLIFGIYE), 207 to 227 (LPWLAAAASPTAGLVSKAAVF), and 281 to 300 (GLTMALCKSTPTTVITLWVY). Solcar repeat units lie at residues 22 to 109 (VSGL…LNTA), 116 to 201 (PPQA…CTIA), and 206 to 306 (GLPW…CLRL).

Belongs to the mitochondrial carrier (TC 2.A.29) family.

Its subcellular location is the mitochondrion inner membrane. In terms of biological role, mitochondrial transporter that mediates uptake of thiamine pyrophosphate (ThPP) into mitochondria. The sequence is that of Mitochondrial thiamine pyrophosphate carrier 1 (TPC1) from Eremothecium gossypii (strain ATCC 10895 / CBS 109.51 / FGSC 9923 / NRRL Y-1056) (Yeast).